Reading from the N-terminus, the 496-residue chain is Glutamate--tRNA ligase (496 aa).

The 'HIGH' region motif lies at 11–21; sequence PSPTGLLHIGN. The 'KMSKS' region signature appears at 255-259; that stretch reads KLSKR. Lys258 lines the ATP pocket.

This sequence belongs to the class-I aminoacyl-tRNA synthetase family. Glutamate--tRNA ligase type 1 subfamily. As to quaternary structure, monomer.

The protein resides in the cytoplasm. The catalysed reaction is tRNA(Glu) + L-glutamate + ATP = L-glutamyl-tRNA(Glu) + AMP + diphosphate. Its function is as follows. Catalyzes the attachment of glutamate to tRNA(Glu) in a two-step reaction: glutamate is first activated by ATP to form Glu-AMP and then transferred to the acceptor end of tRNA(Glu). This chain is Glutamate--tRNA ligase, found in Streptococcus pyogenes serotype M49 (strain NZ131).